We begin with the raw amino-acid sequence, 102 residues long: Large ribosomal subunit protein bL21 (102 aa).

Residues 79–91 show a composition bias toward basic residues; it reads RKDSKRKKGHRQP. Residues 79–102 are disordered; sequence RKDSKRKKGHRQPYTKLTIDKINA.

This sequence belongs to the bacterial ribosomal protein bL21 family. Part of the 50S ribosomal subunit. Contacts protein L20.

Its function is as follows. This protein binds to 23S rRNA in the presence of protein L20. The sequence is that of Large ribosomal subunit protein bL21 from Staphylococcus carnosus (strain TM300).